Reading from the N-terminus, the 400-residue chain is Protection of telomeres homolog 1 (400 aa).

This sequence belongs to the telombin family. As to expression, expressed in sperm and oocytes.

It is found in the nucleus. The protein resides in the nucleus envelope. It localises to the chromosome. Its subcellular location is the telomere. Functionally, telomeric DNA-binding protein, which binds to single-stranded C-rich repeat sequences, with high specificity to the 5'-GCCTAA-3' sequence. Repeat sequence binding can be at the 5' or 3' telomeric end. May have a role in protecting the 5' end of the C-rich strand of the telomere. Acts redundantly with pot-2 to negatively regulate telomerase-mediated telomere extension. Also regulates telomere length by the telomerase-independent telomere maintenance pathway called ALT (alternative lengthening of telomeres). Through sun-1, anchors telomeres to the nuclear envelope in embryos. The chain is Protection of telomeres homolog 1 from Caenorhabditis elegans.